Consider the following 81-residue polypeptide: Large ribosomal subunit protein bL31B (81 aa).

It belongs to the bacterial ribosomal protein bL31 family. Type B subfamily. In terms of assembly, part of the 50S ribosomal subunit.

The polypeptide is Large ribosomal subunit protein bL31B (Bacillus licheniformis (strain ATCC 14580 / DSM 13 / JCM 2505 / CCUG 7422 / NBRC 12200 / NCIMB 9375 / NCTC 10341 / NRRL NRS-1264 / Gibson 46)).